Reading from the N-terminus, the 506-residue chain is MGSESSLVHVFLVSFPGQGHVNPLLRLGKRLASKGLLVTFTTPESIGKQMRKASNISDQPAPVGDGFIRFEFFEDGWDEDEPRRQDLDQYLPQLEKVGKVLIPQMIQKNAEQGRPVSCLINNPFIPWVSDVAETLGLPSAMLWVQSCACFLAYYHYYHGLVPFPSENAMEIDVQLPSMPLLKHDEVPSFLYPTTPYPFLRRAILGQYKNLEKPFCILMDTFQELEHEIIEYTSKICPIKTVGPLFKNPKAPNTTVKGDFMKADDCIGWLDSKPASSVVYVSFGSVVYLKQDQWDEIAYGLLNSGVNFLWVMKPPHKDSGYTVLTLPEGFLEKAGDRGKVVQWSPQEQVLAHPATACFVTHCGWNSSMEALTSGMPVVAFPQWGDQVTDAKYLVDEFKVGVRMCRGEAEDKLITRDVVEQCLREATQGPKAAEMKKNALKWKAAAEASFVEGGSSDRNLQAFVDEVKRRSIEITASKPAVKAAPNGVVAAAESVVETKANGKVELAA.

The active-site Proton acceptor is His20. His20 is a binding site for an anthocyanidin. UDP-alpha-D-glucose contacts are provided by Gln345, His360, Trp363, Asn364, Ser365, and Glu368. Gly383 contacts an anthocyanidin. 2 residues coordinate UDP-alpha-D-glucose: Asp384 and Gln385.

Belongs to the UDP-glycosyltransferase family. In terms of tissue distribution, expressed in roots of the seedlings.

The protein resides in the cytoplasm. It catalyses the reaction 3,4,5-trihydroxybenzoate + UDP-alpha-D-glucose = 1-O-galloyl-beta-D-glucose + UDP. The catalysed reaction is 3,4-dihydroxybenzoate + UDP-alpha-D-glucose = 1-O-(3,4-dihydroxy-benzoyl)-beta-D-glucose + UDP. The enzyme catalyses 4-hydroxybenzoate + UDP-alpha-D-glucose = 4-(beta-D-glucosyloxy)benzoate + UDP + H(+). It carries out the reaction (E)-cinnamate + UDP-alpha-D-glucose = 1-O-(trans-cinnamoyl)-beta-D-glucose + UDP. It catalyses the reaction (E)-sinapate + UDP-alpha-D-glucose = 1-O-(trans-sinapoyl)-beta-D-glucose + UDP. The catalysed reaction is (E)-4-coumarate + UDP-alpha-D-glucose = 1-O-(trans-4-coumaroyl)-beta-D-glucose + UDP. The enzyme catalyses (E)-caffeate + UDP-alpha-D-glucose = 1-O-[(E)-caffeoyl]-beta-D-glucose + UDP. It carries out the reaction (E)-ferulate + UDP-alpha-D-glucose = 1-O-[(E)-feruloyl]-beta-D-glucose + UDP. It catalyses the reaction genistein + UDP-alpha-D-glucose = genistein 7-O-beta-D-glucoside + UDP + H(+). The catalysed reaction is apigenin + UDP-alpha-D-glucose = apigenin 7-O-beta-D-glucoside + UDP + H(+). The enzyme catalyses luteolin + UDP-alpha-D-glucose = luteolin 7-O-beta-D-glucoside + UDP + H(+). Its function is as follows. Glucosyltransferase that catalyzes the formation of 1-O-beta-D-glucose esters with hydroxybenzoic acids and cinnamic acid including its derivatives as preferred glucosyl acceptors. Has significant activity with gallic acid (3,4,5-trihydroxybenzoic acid), 3,4-dihydroxybenzoic acid, 4-hydroxybenzoic acid, cinnamic acid, sinapic acid, coumaric acid, caffeic acid and ferulic acid in vitro. Gallic acid is the predicted native substrate of the enzyme, which thus catalyzes the formation of 1-O-galloyl-beta-D-glucose, the first committed step of hydrolyzable tannins (HTs) biosynthesis, with punicalagin isomers being the major HTs of pomegranate. Catalyzes the formation of flavonoid glucosides with genistein, apigenin and luteolin in vitro. Has low activity with benzoic acid, 2-hydroxybenzoic acid, 3-hydroxybenzoic acid, 2,4-dihydroxybenzoic acid, naringenin and quercetin. No activity with catechol, resveratrol, chlorogenic acid, catechin and epicatechin (building blocks of proanthocyanidins) or cyanidin, delphinidin and pelargonidin (the three anthocyanidins). This is Gallate 1-beta-glucosyltransferase 84A23 from Punica granatum (Pomegranate).